The sequence spans 486 residues: Cardiolipin synthase A (486 aa).

The next 2 helical transmembrane spans lie at T3 to V23 and M38 to V58. 2 consecutive PLD phosphodiesterase domains span residues M219–R246 and E399–S426. Residues H224, K226, D231, H404, K406, and D411 contribute to the active site.

This sequence belongs to the phospholipase D family. Cardiolipin synthase subfamily. ClsA sub-subfamily.

Its subcellular location is the cell inner membrane. It carries out the reaction 2 a 1,2-diacyl-sn-glycero-3-phospho-(1'-sn-glycerol) = a cardiolipin + glycerol. In terms of biological role, catalyzes the reversible phosphatidyl group transfer from one phosphatidylglycerol molecule to another to form cardiolipin (CL) (diphosphatidylglycerol) and glycerol. The polypeptide is Cardiolipin synthase A (Shigella boydii serotype 4 (strain Sb227)).